The sequence spans 924 residues: DNA repair and recombination protein RDH54 (924 aa).

The span at 1–10 (MQIPKYENKP) shows a compositional bias: basic and acidic residues. Disordered regions lie at residues 1 to 21 (MQIP…GSNK) and 155 to 183 (EALS…NDGG). Over residues 168–178 (TTSTTETVPST) the composition is skewed to low complexity. Positions 299 to 487 (LENDSDISGC…FTIIDFINPG (189 aa)) constitute a Helicase ATP-binding domain. 346 to 353 (IPLTGLCK) contacts ATP. The DEGH box motif lies at 472 to 475 (NDLN). Lys-615 is covalently cross-linked (Glycyl lysine isopeptide (Lys-Gly) (interchain with G-Cter in ubiquitin)). Positions 631–790 (KLRVLMTLLE…DSEMRNKESS (160 aa)) constitute a Helicase C-terminal domain.

It belongs to the SNF2/RAD54 helicase family. Interacts with RAD51 and DMC1.

It is found in the nucleus. The enzyme catalyses ATP + H2O = ADP + phosphate + H(+). Functionally, involved in the recombinational repair of double-strand breaks (DSB) in DNA during mitosis and meiosis. Has DNA dependent ATPase activity. Promotes D-loop (displacement loop) formation with RAD51 recombinase. Modifies the topology of double-stranded DNA during the D-loop reaction to facilitate the invasion of the homologous duplex molecule by the initiating single-stranded DNA substrate. Required for adaptation from G2/M checkpoint arrest induced by a double strand break, by participating in monitoring the extent of single-stranded DNA produced by resection of DNA ends. This role is distinct from its roles in recombination. Promotes colocalization of RAD51 and DMC1 during meiotic recombination. Involved in crossover interference. In Saccharomyces cerevisiae (strain RM11-1a) (Baker's yeast), this protein is DNA repair and recombination protein RDH54 (RDH54).